Consider the following 417-residue polypeptide: Multifunctional CCA protein (417 aa).

Residues glycine 8 and arginine 11 each contribute to the ATP site. CTP-binding residues include glycine 8 and arginine 11. Residues aspartate 21 and aspartate 23 each coordinate Mg(2+). Arginine 91, arginine 137, and arginine 140 together coordinate ATP. CTP is bound by residues arginine 91, arginine 137, and arginine 140. One can recognise an HD domain in the interval 225-326 (SGIHTLMTLQ…LNVLKKTDAF (102 aa)).

Belongs to the tRNA nucleotidyltransferase/poly(A) polymerase family. Bacterial CCA-adding enzyme type 1 subfamily. Monomer. Can also form homodimers and oligomers. Mg(2+) serves as cofactor. Requires Ni(2+) as cofactor.

It catalyses the reaction a tRNA precursor + 2 CTP + ATP = a tRNA with a 3' CCA end + 3 diphosphate. The catalysed reaction is a tRNA with a 3' CCA end + 2 CTP + ATP = a tRNA with a 3' CCACCA end + 3 diphosphate. Functionally, catalyzes the addition and repair of the essential 3'-terminal CCA sequence in tRNAs without using a nucleic acid template. Adds these three nucleotides in the order of C, C, and A to the tRNA nucleotide-73, using CTP and ATP as substrates and producing inorganic pyrophosphate. tRNA 3'-terminal CCA addition is required both for tRNA processing and repair. Also involved in tRNA surveillance by mediating tandem CCA addition to generate a CCACCA at the 3' terminus of unstable tRNAs. While stable tRNAs receive only 3'-terminal CCA, unstable tRNAs are marked with CCACCA and rapidly degraded. In Neisseria meningitidis serogroup B (strain ATCC BAA-335 / MC58), this protein is Multifunctional CCA protein.